A 550-amino-acid chain; its full sequence is MNWILCLSLTLLLVVQTAWGALHTKEPLADTKYGTLRGKQIHVGKTPINVFLGVPFSKPPVGAHRFAAPEPPEPWEGIRDATTYAPVCLQESWGQVTSMYFNTHKRYKWLHFSEDCLYLNVHAPVRARGDPLQPVMIWFPGGAFLVGSASTYDGSELAAREKVVVVVLQHRLGILGFLSTGDSQARGNWALLDQIAALRWVQKNIEAFGGDPGCVTLFGQSSGAMCISGLMTSSLARGLFHRAISQSGTAVFQNFITPDPLKVAKKIAQLAGCNHNSTKILVDCLRTLSGAEVMRVSQKMRFFKLHSQEDPQKVVWFMSPVVDGVVFQDNPIVLLTQGQVAPVPYLLGVNNLEFNWLLPFIMKFPMSHLRKETIAKLLWSTSTLLNVTKEQLPLVMEEYLRDVDDHDQKMLQKHVMDLAADATFVYSTLQAAHYHHNAGFPVYLYEFEHYAPGTIVKPRTDGADHGDEIGFIFGSPFSKGHSSNKEKALSLQMMKYWANFARTGNPNGGKLPYWPRYNKDEKYLQLDLTTRVGVMLREEKMAFWKRLHQN.

Residues 1 to 20 (MNWILCLSLTLLLVVQTAWG) form the signal peptide. Residues Cys88 and Cys116 are joined by a disulfide bond. Ser221 serves as the catalytic Acyl-ester intermediate. Cys273 and Cys284 form a disulfide bridge. Residue Asn276 is glycosylated (N-linked (GlcNAc...) asparagine). The active-site Charge relay system is the Glu353. The N-linked (GlcNAc...) asparagine glycan is linked to Asn386. Catalysis depends on His465, which acts as the Charge relay system.

This sequence belongs to the type-B carboxylesterase/lipase family.

The protein resides in the secreted. Functionally, probable carboxylesterase. The polypeptide is Carboxylesterase 4A (CES4A) (Bos taurus (Bovine)).